The sequence spans 473 residues: Photosystem II CP43 reaction center protein (473 aa).

Positions 1 to 14 (MKTLYSLRRFYHVE) are excised as a propeptide. Position 15 is an N-acetylthreonine (T15). T15 is subject to Phosphothreonine. Helical transmembrane passes span 69–93 (LFEV…PHLA), 134–155 (LLGP…KDRN), 178–200 (KALY…RKIT), 255–275 (KPFA…LSYS), and 291–312 (WFNN…ASQA). E367 provides a ligand contact to [CaMn4O5] cluster. Residues 447–471 (RARAAAAGFEKGIDRDFEPVLSMTP) traverse the membrane as a helical segment.

This sequence belongs to the PsbB/PsbC family. PsbC subfamily. As to quaternary structure, PSII is composed of 1 copy each of membrane proteins PsbA, PsbB, PsbC, PsbD, PsbE, PsbF, PsbH, PsbI, PsbJ, PsbK, PsbL, PsbM, PsbT, PsbX, PsbY, PsbZ, Psb30/Ycf12, at least 3 peripheral proteins of the oxygen-evolving complex and a large number of cofactors. It forms dimeric complexes. Requires Binds multiple chlorophylls and provides some of the ligands for the Ca-4Mn-5O cluster of the oxygen-evolving complex. It may also provide a ligand for a Cl- that is required for oxygen evolution. PSII binds additional chlorophylls, carotenoids and specific lipids. as cofactor.

The protein resides in the plastid. It localises to the chloroplast thylakoid membrane. In terms of biological role, one of the components of the core complex of photosystem II (PSII). It binds chlorophyll and helps catalyze the primary light-induced photochemical processes of PSII. PSII is a light-driven water:plastoquinone oxidoreductase, using light energy to abstract electrons from H(2)O, generating O(2) and a proton gradient subsequently used for ATP formation. The polypeptide is Photosystem II CP43 reaction center protein (Coffea arabica (Arabian coffee)).